The primary structure comprises 221 residues: Interleukin-12 subunit alpha (221 aa).

An N-terminal signal peptide occupies residues 1-25 (MCPLRSLLLISTLVLLHHLPHLSLG). Cystine bridges form between Cys39/Cys112, Cys66/Cys198, and Cys87/Cys125. A glycan (N-linked (GlcNAc...) asparagine) is linked at Asn95.

It belongs to the IL-6 superfamily. As to quaternary structure, heterodimer with IL12B; disulfide-linked. This heterodimer is known as interleukin IL-12. Heterodimer with EBI3/IL27B; not disulfide-linked. This heterodimer is known as interleukin IL-35. Interacts with NBR1; this interaction promotes IL-12 secretion.

It localises to the secreted. In terms of biological role, heterodimerizes with IL12B to form the IL-12 cytokine or with EBI3/IL27B to form the IL-35 cytokine. IL-12 is primarily produced by professional antigen-presenting cells (APCs) such as B-cells and dendritic cells (DCs) as well as macrophages and granulocytes and regulates T-cell and natural killer-cell responses, induces the production of interferon-gamma (IFN-gamma), favors the differentiation of T-helper 1 (Th1) cells and is an important link between innate resistance and adaptive immunity. Mechanistically, exerts its biological effects through a receptor composed of IL12R1 and IL12R2 subunits. Binding to the receptor results in the rapid tyrosine phosphorylation of a number of cellular substrates including the JAK family kinases TYK2 and JAK2. In turn, recruited STAT4 gets phosphorylated and translocates to the nucleus where it regulates cytokine/growth factor responsive genes. As part of IL-35, plays essential roles in maintaining the immune homeostasis of the liver microenvironment and also functions as an immune-suppressive cytokine. Mediates biological events through unconventional receptors composed of IL12RB2 and gp130/IL6ST heterodimers or homodimers. Signaling requires the transcription factors STAT1 and STAT4, which form a unique heterodimer that binds to distinct DNA sites. This chain is Interleukin-12 subunit alpha (IL12A), found in Bubalus carabanensis (Swamp type water buffalo).